Here is a 121-residue protein sequence, read N- to C-terminus: Large ribosomal subunit protein uL18 (121 aa).

It belongs to the universal ribosomal protein uL18 family. Part of the 50S ribosomal subunit; part of the 5S rRNA/L5/L18/L25 subcomplex. Contacts the 5S and 23S rRNAs.

Functionally, this is one of the proteins that bind and probably mediate the attachment of the 5S RNA into the large ribosomal subunit, where it forms part of the central protuberance. This chain is Large ribosomal subunit protein uL18, found in Mesomycoplasma hyopneumoniae (strain 232) (Mycoplasma hyopneumoniae).